We begin with the raw amino-acid sequence, 458 residues long: Flavohemoprotein (458 aa).

One can recognise a Globin domain in the interval 2–158; the sequence is PLSEDTIKAV…LAHLFVRREE (157 aa). His-107 contacts heme b. Active-site charge relay system residues include Tyr-117 and Glu-157. Residues 169–457 form a reductase region; that stretch reads GGWRQTRSFR…FEMFGPFKPL (289 aa). In terms of domain architecture, FAD-binding FR-type spans 172 to 279; sequence RQTRSFRVEE…APPYGDFFLE (108 aa). FAD-binding positions include Tyr-211 and 228–231; that span reads RQYS. NADP(+) is bound at residue 320–325; that stretch reads GIGQTP. 450-453 contributes to the FAD binding site; the sequence is MFGP.

This sequence belongs to the globin family. Two-domain flavohemoproteins subfamily. It in the C-terminal section; belongs to the flavoprotein pyridine nucleotide cytochrome reductase family. As to quaternary structure, monomer. Heme b serves as cofactor. Requires FAD as cofactor.

The enzyme catalyses 2 nitric oxide + NADPH + 2 O2 = 2 nitrate + NADP(+) + H(+). The catalysed reaction is 2 nitric oxide + NADH + 2 O2 = 2 nitrate + NAD(+) + H(+). In terms of biological role, flavohemoprotein involved in nitric oxide (NO) detoxification in an aerobic process, termed nitric oxide dioxygenase (NOD) reaction that utilizes O(2) and NAD(P)H to convert NO to nitrate, which protects the protozoan parasite from various noxious nitrogen compounds. Therefore, plays a central role in the inducible response to nitrosative stress. May also be involved in O(2) detoxification. The polypeptide is Flavohemoprotein (hmpA) (Giardia intestinalis (strain ATCC 50581 / GS clone H7) (Giardia lamblia)).